A 237-amino-acid polypeptide reads, in one-letter code: Uridylate kinase (237 aa).

Position 12-15 (12-15) interacts with ATP; sequence KLSG. The segment at 20-25 is involved in allosteric activation by GTP; it reads GENGFG. Gly54 serves as a coordination point for UMP. Residues Gly55 and Arg59 each coordinate ATP. UMP is bound by residues Asp72 and 133-140; that span reads TGNPYFST. ATP is bound by residues Tyr166 and Asp169.

The protein belongs to the UMP kinase family. In terms of assembly, homohexamer.

It is found in the cytoplasm. The enzyme catalyses UMP + ATP = UDP + ADP. The protein operates within pyrimidine metabolism; CTP biosynthesis via de novo pathway; UDP from UMP (UMPK route): step 1/1. Its activity is regulated as follows. Allosterically activated by GTP. Inhibited by UTP. Its function is as follows. Catalyzes the reversible phosphorylation of UMP to UDP. This Clostridium perfringens (strain SM101 / Type A) protein is Uridylate kinase.